A 1405-amino-acid polypeptide reads, in one-letter code: Centlein (1405 aa).

The span at 1–14 (MAARSPPSPHPSPP) shows a compositional bias: pro residues. Residues 1–79 (MAARSPPSPH…GGAAPAHAPL (79 aa)) are disordered. Ala2 carries the post-translational modification N-acetylalanine. 2 positions are modified to phosphoserine: Ser5 and Ser22. Basic and acidic residues predominate over residues 48–58 (VVADESDKIWV). Positions 61 to 71 (EGSGGRRGPGG) are enriched in gly residues. The stretch at 95–126 (EEAMVTRTQLLEEELSSLKEELALCQADKEFV) forms a coiled coil. 2 disordered regions span residues 421 to 450 (KLKEKLQESQGAPLPLPQESDPDYSAQVPH) and 493 to 529 (SRKSIMTSAEGKHKEPPVKRSRSLSPKSSFTDSEELQ). 2 coiled-coil regions span residues 613–655 (NELA…ELNR) and 681–793 (KNGK…ELIN). The disordered stretch occupies residues 865-917 (WEDVSESSSDSEAQTSQTLGTIIVETSQKISPTEDGKDQKESDPTEDSQTQGK). The segment covering 877–895 (AQTSQTLGTIIVETSQKIS) has biased composition (polar residues). Basic and acidic residues predominate over residues 896–907 (PTEDGKDQKESD). A coiled-coil region spans residues 980–1311 (NIILLRERII…IRELKKMKKN (332 aa)). Position 1343 is a phosphothreonine (Thr1343).

In terms of assembly, interacts with CEP250 and CEP68. Interacts with NEK2; the interaction leads to phosphorylation of CNTLN. In terms of processing, phosphorylated directly or indirectly by NEK2.

Its subcellular location is the cytoplasm. It is found in the cytoskeleton. It localises to the microtubule organizing center. The protein resides in the centrosome. The protein localises to the centriole. In terms of biological role, required for centrosome cohesion and recruitment of CEP68 to centrosomes. The protein is Centlein (CNTLN) of Homo sapiens (Human).